Reading from the N-terminus, the 660-residue chain is Protein FAM161A (660 aa).

2 coiled-coil regions span residues 93-120 (EEYF…YQDK) and 296-320 (YHDL…ALLA). The tract at residues 341-525 (QLRDFLKYKK…PTVSSRGREQ (185 aa)) is required for interaction with CFAP418. Residues Lys468 and Lys484 each participate in a glycyl lysine isopeptide (Lys-Gly) (interchain with G-Cter in SUMO2) cross-link. Positions 522-552 (GREQAVRKSEKERMREYQRELEEREEKLKKR) form a coiled coil. Residues 605 to 660 (KSVTEDKESFNEEEKIEERENGEENYFIDTNSQDSYKEKDEANEESEEEKSVEESH) form a disordered region. A compositionally biased stretch (basic and acidic residues) spans 606–623 (SVTEDKESFNEEEKIEER). A compositionally biased stretch (acidic residues) spans 645 to 660 (EANEESEEEKSVEESH).

Belongs to the FAM161 family. Interacts (via central region) with CFAP418 (via N-terminus); the interaction is direct. Interacts (via C-terminus) with microtubules. Interacts with LCA5. Interacts with CEP290. Interacts with SDCCAG8. Interacts with FAM161B. Interacts with POC1B. Interacts with CEP78. Forms a microtubule-associated complex with POC5, CETN2 and POC1B. Interacts with CCDC15. Isoform 1 and isoform 3 are widely expressed with highest levels in retina and testis, with isoform 1 being the most abundant in all tissues tested.

The protein resides in the cytoplasm. Its subcellular location is the cytoskeleton. The protein localises to the cilium basal body. It localises to the cell projection. It is found in the cilium. The protein resides in the microtubule organizing center. Its subcellular location is the centrosome. The protein localises to the centriole. In terms of biological role, involved in ciliogenesis. In Homo sapiens (Human), this protein is Protein FAM161A (FAM161A).